A 510-amino-acid chain; its full sequence is Nucleosome assembly protein 1-like 3 (510 aa).

Disordered stretches follow at residues 1–99 (MAEA…LGTN) and 161–311 (PTEE…KRED). Residues 35-74 (SSSSSSSTSGSSSSSSTSGSSSSSGSGSSSSSSGSGSTSS) show a composition bias toward low complexity. A compositionally biased stretch (acidic residues) spans 161 to 182 (PTEEECEWNSEDEEFSSDEEVQ). Basic and acidic residues-rich tracts occupy residues 200–229 (PKEN…EVPK), 235–246 (KAEEKADSKDCM), and 254–300 (EDPK…VDLK).

The protein belongs to the nucleosome assembly protein (NAP) family.

Its subcellular location is the nucleus. The polypeptide is Nucleosome assembly protein 1-like 3 (NAP1L3) (Pongo abelii (Sumatran orangutan)).